The primary structure comprises 290 residues: MDHSLTQDRWQAWCRLMRIDKPIGSLLLLWPTLWALWLAGMAIPALGTLTVFILGVFFMRAAGCVINDYADRKIDGHVKRTRARPLPSGAIGEKEAKLLFGALVGISFALVLTLNSMTIALSTVALALAWVYPFMKRYTHLPQLVLGAAFGWSIPMVFTAVSESLPLSCWLLFLANITWTVAYDTQYAMVDRDDDLRIGVKSTAILFGRFDKLIIGLLQLATLLLLGVIGWQLGLGRIYYLALAGAAGLFLWQQKLIVDREREACFRAFLNNNLVGMLIFVGILLSLLSY.

Helical transmembrane passes span 38 to 58, 99 to 119, 141 to 161, 213 to 233, 238 to 258, and 268 to 288; these read LAGM…GVFF, LFGA…SMTI, LPQL…FTAV, LIIG…GWQL, IYYL…KLIV, and AFLN…LSLL.

Belongs to the UbiA prenyltransferase family. Requires Mg(2+) as cofactor.

It is found in the cell inner membrane. The catalysed reaction is all-trans-octaprenyl diphosphate + 4-hydroxybenzoate = 4-hydroxy-3-(all-trans-octaprenyl)benzoate + diphosphate. The protein operates within cofactor biosynthesis; ubiquinone biosynthesis. Functionally, catalyzes the prenylation of para-hydroxybenzoate (PHB) with an all-trans polyprenyl group. Mediates the second step in the final reaction sequence of ubiquinone-8 (UQ-8) biosynthesis, which is the condensation of the polyisoprenoid side chain with PHB, generating the first membrane-bound Q intermediate 3-octaprenyl-4-hydroxybenzoate. This is 4-hydroxybenzoate octaprenyltransferase from Sodalis glossinidius (strain morsitans).